The chain runs to 374 residues: Anhydro-N-acetylmuramic acid kinase (374 aa).

12 to 19 (GTSLDGID) is a binding site for ATP.

This sequence belongs to the anhydro-N-acetylmuramic acid kinase family.

It catalyses the reaction 1,6-anhydro-N-acetyl-beta-muramate + ATP + H2O = N-acetyl-D-muramate 6-phosphate + ADP + H(+). Its pathway is amino-sugar metabolism; 1,6-anhydro-N-acetylmuramate degradation. The protein operates within cell wall biogenesis; peptidoglycan recycling. Its function is as follows. Catalyzes the specific phosphorylation of 1,6-anhydro-N-acetylmuramic acid (anhMurNAc) with the simultaneous cleavage of the 1,6-anhydro ring, generating MurNAc-6-P. Is required for the utilization of anhMurNAc either imported from the medium or derived from its own cell wall murein, and thus plays a role in cell wall recycling. This chain is Anhydro-N-acetylmuramic acid kinase, found in Sodalis glossinidius (strain morsitans).